An 805-amino-acid chain; its full sequence is Lon protease (805 aa).

The 193-residue stretch at 13–205 (IPIIVEDELF…KLIDYVIEEI (193 aa)) folds into the Lon N-terminal domain. Residue 366–373 (GPPGVGKT) coordinates ATP. One can recognise a Lon proteolytic domain in the interval 603 to 803 (KDQIGLVNGL…DDVLKNALVA (201 aa)). Active-site residues include Ser708 and Lys751.

This sequence belongs to the peptidase S16 family. As to quaternary structure, homohexamer. Organized in a ring with a central cavity.

It localises to the cytoplasm. The catalysed reaction is Hydrolysis of proteins in presence of ATP.. ATP-dependent serine protease that mediates the selective degradation of mutant and abnormal proteins as well as certain short-lived regulatory proteins. Required for cellular homeostasis and for survival from DNA damage and developmental changes induced by stress. Degrades polypeptides processively to yield small peptide fragments that are 5 to 10 amino acids long. Binds to DNA in a double-stranded, site-specific manner. This is Lon protease from Campylobacter concisus (strain 13826).